Consider the following 311-residue polypeptide: Energy-coupling factor transporter ATP-binding protein EcfA2 (311 aa).

One can recognise an ABC transporter domain in the interval 3-265 (IKLKDVKFTF…IAFLEENNLQ (263 aa)). ATP is bound at residue 40–47 (GQTGSGKT).

The protein belongs to the ABC transporter superfamily. Energy-coupling factor EcfA family. Forms a stable energy-coupling factor (ECF) transporter complex composed of 2 membrane-embedded substrate-binding proteins (S component), 2 ATP-binding proteins (A component) and 2 transmembrane proteins (T component).

The protein localises to the cell membrane. Its function is as follows. ATP-binding (A) component of a common energy-coupling factor (ECF) ABC-transporter complex. Unlike classic ABC transporters this ECF transporter provides the energy necessary to transport a number of different substrates. The chain is Energy-coupling factor transporter ATP-binding protein EcfA2 from Mycoplasmopsis synoviae (strain 53) (Mycoplasma synoviae).